A 97-amino-acid polypeptide reads, in one-letter code: Large ribosomal subunit protein bL27 (97 aa).

Positions 1–12 are excised as a propeptide; it reads MIKLNLSNLQHF. The disordered stretch occupies residues 13–38; that stretch reads AHKKGGGSTSNGRDSQAKRLGAKAAD.

The protein belongs to the bacterial ribosomal protein bL27 family. In terms of processing, the N-terminus is cleaved by ribosomal processing cysteine protease Prp.

The sequence is that of Large ribosomal subunit protein bL27 from Streptococcus equi subsp. equi (strain 4047).